We begin with the raw amino-acid sequence, 132 residues long: DNA-directed RNA polymerase subunit omega (132 aa).

This sequence belongs to the RNA polymerase subunit omega family. The RNAP catalytic core consists of 2 alpha, 1 beta, 1 beta' and 1 omega subunit. When a sigma factor is associated with the core the holoenzyme is formed, which can initiate transcription.

The catalysed reaction is RNA(n) + a ribonucleoside 5'-triphosphate = RNA(n+1) + diphosphate. Promotes RNA polymerase assembly. Latches the N- and C-terminal regions of the beta' subunit thereby facilitating its interaction with the beta and alpha subunits. In Bartonella bacilliformis (strain ATCC 35685 / KC583 / Herrer 020/F12,63), this protein is DNA-directed RNA polymerase subunit omega.